The primary structure comprises 165 residues: Cytochrome c-550-like protein (165 aa).

Residues 1–38 (MPHLDQKLPMRWRIPSRLWAWVGILALLWLGLASPVAA) form the signal peptide. Positions 83, 86, 87, and 137 each coordinate heme c.

This sequence belongs to the cytochrome c family. PsbV subfamily. It depends on heme c as a cofactor.

It localises to the cellular thylakoid membrane. Possible low-potential cytochrome c. The polypeptide is Cytochrome c-550-like protein (psbV2) (Synechococcus sp. (strain JA-2-3B'a(2-13)) (Cyanobacteria bacterium Yellowstone B-Prime)).